A 202-amino-acid chain; its full sequence is Proteasome subunit beta 1 (202 aa).

Positions 1-8 (MGEVVLPG) are cleaved as a propeptide — removed in mature form; by autocatalysis. The active-site Nucleophile is Thr-9.

This sequence belongs to the peptidase T1B family. As to quaternary structure, the 20S proteasome core is composed of 14 alpha and 14 beta subunits that assemble into four stacked heptameric rings, resulting in a barrel-shaped structure. The two inner rings, each composed of seven catalytic beta subunits, are sandwiched by two outer rings, each composed of seven alpha subunits. The catalytic chamber with the active sites is on the inside of the barrel. Has a gated structure, the ends of the cylinder being occluded by the N-termini of the alpha-subunits. Is capped at one or both ends by the proteasome regulatory ATPase, PAN.

The protein resides in the cytoplasm. It carries out the reaction Cleavage of peptide bonds with very broad specificity.. The formation of the proteasomal ATPase PAN-20S proteasome complex, via the docking of the C-termini of PAN into the intersubunit pockets in the alpha-rings, triggers opening of the gate for substrate entry. Interconversion between the open-gate and close-gate conformations leads to a dynamic regulation of the 20S proteasome proteolysis activity. Component of the proteasome core, a large protease complex with broad specificity involved in protein degradation. The polypeptide is Proteasome subunit beta 1 (Desulfurococcus amylolyticus (strain DSM 18924 / JCM 16383 / VKM B-2413 / 1221n) (Desulfurococcus kamchatkensis)).